Reading from the N-terminus, the 463-residue chain is tRNA-2-methylthio-N(6)-dimethylallyladenosine synthase (463 aa).

An MTTase N-terminal domain is found at 19-135; it reads RSYWITTFGC…LENLLGKVDL (117 aa). Cys-28, Cys-64, Cys-98, Cys-170, Cys-174, and Cys-177 together coordinate [4Fe-4S] cluster. One can recognise a Radical SAM core domain in the interval 156-393; that stretch reads RESSICGWVN…NALVEKTARN (238 aa). Residues 396 to 463 form the TRAM domain; sequence QRYINNIESV…RPFSLTGELC (68 aa).

Belongs to the methylthiotransferase family. MiaB subfamily. As to quaternary structure, monomer. It depends on [4Fe-4S] cluster as a cofactor.

The protein resides in the cytoplasm. It catalyses the reaction N(6)-dimethylallyladenosine(37) in tRNA + (sulfur carrier)-SH + AH2 + 2 S-adenosyl-L-methionine = 2-methylsulfanyl-N(6)-dimethylallyladenosine(37) in tRNA + (sulfur carrier)-H + 5'-deoxyadenosine + L-methionine + A + S-adenosyl-L-homocysteine + 2 H(+). Catalyzes the methylthiolation of N6-(dimethylallyl)adenosine (i(6)A), leading to the formation of 2-methylthio-N6-(dimethylallyl)adenosine (ms(2)i(6)A) at position 37 in tRNAs that read codons beginning with uridine. The protein is tRNA-2-methylthio-N(6)-dimethylallyladenosine synthase of Prochlorococcus marinus (strain MIT 9312).